A 61-amino-acid polypeptide reads, in one-letter code: Inner membrane protein p12 (61 aa).

Residues 16-36 (LLIVAIIVVIMAIMLYYFWWM) form a helical membrane-spanning segment.

It belongs to the asfivirus inner membrane protein p12 family. As to quaternary structure, homomultimer; disulfide-linked. In terms of processing, not glycosylated.

The protein resides in the virion membrane. This is Inner membrane protein p12 from Ornithodoros (relapsing fever ticks).